Consider the following 412-residue polypeptide: DNA utilization protein HofQ (412 aa).

Positions 1–18 (MKQWIAALLLMLIPGVQA) are cleaved as a signal peptide.

This sequence belongs to the bacterial secretin family. PilQ subfamily.

The protein localises to the cell outer membrane. Functionally, required for the use of extracellular DNA as a nutrient. Could be the porin responsible for transport of DNA across the outer membrane. The sequence is that of DNA utilization protein HofQ (hofQ) from Escherichia coli (strain K12).